The primary structure comprises 1032 residues: Leucine-rich repeat and coiled-coil domain-containing protein 1 (1032 aa).

LRR repeat units follow at residues Thr44 to Trp65, Asn66 to Thr87, Lys88 to Ile109, Asn110 to His131, and Lys136 to Met157. Positions Asn175–Gln218 constitute an LRRCT domain. The tract at residues Asp316 to Arg345 is disordered. The span at Val318–Asp330 shows a compositional bias: basic and acidic residues. The stretch at Asn421–Leu647 forms a coiled coil.

This sequence belongs to the LRRCC1 family.

The protein localises to the cytoplasm. It is found in the cytoskeleton. It localises to the microtubule organizing center. Its subcellular location is the centrosome. The protein resides in the centriole. Required for the organization of the mitotic spindle. Maintains the structural integrity of centrosomes during mitosis. The polypeptide is Leucine-rich repeat and coiled-coil domain-containing protein 1 (LRRCC1) (Homo sapiens (Human)).